The following is a 285-amino-acid chain: MDFSHSQQNECARSSVACKWSLAEAQQKLNSLALHNSESMDQEQAMAQAELSELQRSEEEWRRKEAALSQGENWGLPTTDGLNQDVFNKSFINQVKKSIDGEDQSISFIQKYEAKIRHFGMLSRWNDSQHFLSEYPDLVSEETAKYLLLWCSHLESEQKTALMEQVAHQAVVMQFIIEMAKSCNMDPRGCFRLFFQKAKEEKEGYFEAFKSELEILKSKVRQHAECQRYEAAILRKPAFPPDLGHMGTQQCHQKDVLQSHPNAAVCHLNPMEHAEDEDLKMMDTL.

The segment at 34 to 54 is disordered; that stretch reads LHNSESMDQEQAMAQAELSEL. The stretch at 35-73 forms a coiled coil; that stretch reads HNSESMDQEQAMAQAELSELQRSEEEWRRKEAALSQGEN.

Belongs to the CDC37 family. As to quaternary structure, forms complexes with Hsp70 and Hsp90.

The protein localises to the cytoplasm. In terms of biological role, co-chaperone that binds to numerous proteins and promotes their interaction with Hsp70 and Hsp90. The polypeptide is Hsp90 co-chaperone Cdc37-like 1 (cdc37l1) (Xenopus tropicalis (Western clawed frog)).